Here is a 435-residue protein sequence, read N- to C-terminus: Monodehydroascorbate reductase 3, cytosolic (435 aa).

FAD contacts are provided by residues 14–17 (GGVA), glutamate 41, arginine 48, lysine 53, isoleucine 96, and 147–148 (RE). NAD(+) contacts are provided by residues 172–178 (GGYIGLE), glutamate 196, arginine 202, and glycine 261. An NADP(+)-binding site is contributed by 174–178 (YIGLE). Arginine 202 and glycine 261 together coordinate NADP(+). Position 298 (aspartate 298) interacts with FAD. 314 to 315 (EH) provides a ligand contact to NAD(+). 314–315 (EH) contacts NADP(+). Valine 316 is a binding site for FAD. Arginine 320 is a binding site for L-ascorbate. FAD is bound at residue tyrosine 349. Tyrosine 349 contributes to the NAD(+) binding site. Tyrosine 349 is an NADP(+) binding site. Arginine 351 provides a ligand contact to L-ascorbate.

The protein belongs to the FAD-dependent oxidoreductase family. It depends on FAD as a cofactor.

The protein resides in the cytoplasm. It carries out the reaction 2 monodehydro-L-ascorbate radical + NADH + H(+) = 2 L-ascorbate + NAD(+). Catalyzes the conversion of monodehydroascorbate to ascorbate, oxidizing NADH in the process. Ascorbate is a major antioxidant against reactive oxygen species (ROS) and nitric oxide (NO). Can use NADPH as electron donor, but possesses lower activity compared to NADH as electron donor. The polypeptide is Monodehydroascorbate reductase 3, cytosolic (Oryza sativa subsp. japonica (Rice)).